We begin with the raw amino-acid sequence, 210 residues long: NAD(P)H-quinone oxidoreductase subunit I (210 aa).

4Fe-4S ferredoxin-type domains are found at residues 54–83 and 94–123; these read GRIHFEFDKCIACEICVRVCPIDLPVVDWA and YSYSIDFGVCIFCANCVEFCPTNCLSVTED. Cys-63, Cys-66, Cys-69, Cys-73, Cys-103, Cys-106, Cys-109, and Cys-113 together coordinate [4Fe-4S] cluster.

The protein belongs to the complex I 23 kDa subunit family. In terms of assembly, NDH-1 is composed of at least 11 different subunits. [4Fe-4S] cluster is required as a cofactor.

It localises to the cellular thylakoid membrane. It carries out the reaction a plastoquinone + NADH + (n+1) H(+)(in) = a plastoquinol + NAD(+) + n H(+)(out). The enzyme catalyses a plastoquinone + NADPH + (n+1) H(+)(in) = a plastoquinol + NADP(+) + n H(+)(out). Functionally, NDH-1 shuttles electrons from an unknown electron donor, via FMN and iron-sulfur (Fe-S) centers, to quinones in the respiratory and/or the photosynthetic chain. The immediate electron acceptor for the enzyme in this species is believed to be plastoquinone. Couples the redox reaction to proton translocation, and thus conserves the redox energy in a proton gradient. The polypeptide is NAD(P)H-quinone oxidoreductase subunit I (Synechococcus sp. (strain JA-2-3B'a(2-13)) (Cyanobacteria bacterium Yellowstone B-Prime)).